The sequence spans 329 residues: DNA-directed RNA polymerase subunit alpha (329 aa).

Residues 1 to 235 (MQGSVTEFLK…EQLDAFVDLR (235 aa)) form an alpha N-terminal domain (alpha-NTD) region. Residues 249 to 329 (FDPILLRPVD…NWPPASIAED (81 aa)) form an alpha C-terminal domain (alpha-CTD) region.

The protein belongs to the RNA polymerase alpha chain family. Homodimer. The RNAP catalytic core consists of 2 alpha, 1 beta, 1 beta' and 1 omega subunit. When a sigma factor is associated with the core the holoenzyme is formed, which can initiate transcription.

It catalyses the reaction RNA(n) + a ribonucleoside 5'-triphosphate = RNA(n+1) + diphosphate. In terms of biological role, DNA-dependent RNA polymerase catalyzes the transcription of DNA into RNA using the four ribonucleoside triphosphates as substrates. This is DNA-directed RNA polymerase subunit alpha from Actinobacillus succinogenes (strain ATCC 55618 / DSM 22257 / CCUG 43843 / 130Z).